The primary structure comprises 188 residues: MSAVELILLQRVENLGQMGDVVKVKPGYARNFLLPQGKAIRANALNRERFERERVQLEALNLKRREEAERLSERMHGLSVVLIRQAGDSGSLYGSVTTRDIAEAATAAGLTVARTQVILENPIKQLGLYDVRVALHPEVSIPVTVNVARSEEEAERQARGEEIGVEKEEPSGFVEEALEETVEAPAEA.

The segment covering 149–170 (RSEEEAERQARGEEIGVEKEEP) has biased composition (basic and acidic residues). A disordered region spans residues 149 to 188 (RSEEEAERQARGEEIGVEKEEPSGFVEEALEETVEAPAEA).

The protein belongs to the bacterial ribosomal protein bL9 family.

Its function is as follows. Binds to the 23S rRNA. In Gluconacetobacter diazotrophicus (strain ATCC 49037 / DSM 5601 / CCUG 37298 / CIP 103539 / LMG 7603 / PAl5), this protein is Large ribosomal subunit protein bL9.